Consider the following 648-residue polypeptide: Threonine--tRNA ligase (648 aa).

Residues 1 to 61 (MITITFPDGA…EEDGSIEIIT (61 aa)) form the TGS domain. A catalytic region spans residues 242–540 (DHRKLGKELD…LIETYKGAFP (299 aa)). The Zn(2+) site is built by C336, H387, and H517.

This sequence belongs to the class-II aminoacyl-tRNA synthetase family. In terms of assembly, homodimer. It depends on Zn(2+) as a cofactor.

The protein localises to the cytoplasm. It carries out the reaction tRNA(Thr) + L-threonine + ATP = L-threonyl-tRNA(Thr) + AMP + diphosphate + H(+). In terms of biological role, catalyzes the attachment of threonine to tRNA(Thr) in a two-step reaction: L-threonine is first activated by ATP to form Thr-AMP and then transferred to the acceptor end of tRNA(Thr). Also edits incorrectly charged L-seryl-tRNA(Thr). The chain is Threonine--tRNA ligase from Streptococcus equi subsp. zooepidemicus (strain H70).